A 274-amino-acid chain; its full sequence is Purine nucleoside phosphorylase 1 (274 aa).

Phosphate-binding positions include Ser29, His60, 80 to 82 (RFH), and Ala112. Position 29 is a phosphoserine (Ser29). Residue Glu192 participates in a purine D-ribonucleoside binding. Ser211 lines the phosphate pocket. An a purine D-ribonucleoside-binding site is contributed by Asn234.

Belongs to the PNP/MTAP phosphorylase family. As to quaternary structure, homotrimer.

It carries out the reaction a purine D-ribonucleoside + phosphate = a purine nucleobase + alpha-D-ribose 1-phosphate. It catalyses the reaction a purine 2'-deoxy-D-ribonucleoside + phosphate = a purine nucleobase + 2-deoxy-alpha-D-ribose 1-phosphate. It functions in the pathway purine metabolism; purine nucleoside salvage. Its function is as follows. The purine nucleoside phosphorylases catalyze the phosphorolytic breakdown of the N-glycosidic bond in the beta-(deoxy)ribonucleoside molecules, with the formation of the corresponding free purine bases and pentose-1-phosphate. Cleaves guanosine, inosine, 2'-deoxyguanosine and 2'-deoxyinosine. In Geobacillus stearothermophilus (Bacillus stearothermophilus), this protein is Purine nucleoside phosphorylase 1 (punA).